Here is a 467-residue protein sequence, read N- to C-terminus: Uronate isomerase (467 aa).

This sequence belongs to the metallo-dependent hydrolases superfamily. Uronate isomerase family.

The catalysed reaction is D-glucuronate = D-fructuronate. The enzyme catalyses aldehydo-D-galacturonate = keto-D-tagaturonate. It functions in the pathway carbohydrate metabolism; pentose and glucuronate interconversion. This chain is Uronate isomerase, found in Mannheimia succiniciproducens (strain KCTC 0769BP / MBEL55E).